A 345-amino-acid polypeptide reads, in one-letter code: uncharacterized protein (345 aa).

The protein resides in the plastid. The protein localises to the chloroplast. This is an uncharacterized protein from Chlamydomonas moewusii (Chlamydomonas eugametos).